A 122-amino-acid chain; its full sequence is MNTMILSEYLSVLIFFIFSFGLSCIILGLSYVLATQNADTEKLSPYECGFNPFDDARGAFDVRFYLVAILFIIFDLEVAFLFPWAVALSDVTIFGFWTMFIFLLILTVGFIYEWKKGALDWE.

3 helical membrane passes run 12–32, 66–86, and 91–111; these read VLIF…LSYV, LVAI…PWAV, and VTIF…VGFI.

Belongs to the complex I subunit 3 family.

It localises to the mitochondrion membrane. It carries out the reaction a ubiquinone + NADH + 5 H(+)(in) = a ubiquinol + NAD(+) + 4 H(+)(out). Core subunit of the mitochondrial membrane respiratory chain NADH dehydrogenase (Complex I) that is believed to belong to the minimal assembly required for catalysis. Complex I functions in the transfer of electrons from NADH to the respiratory chain. The immediate electron acceptor for the enzyme is believed to be ubiquinone. This is NADH-ubiquinone oxidoreductase chain 3 (NAD3) from Reclinomonas americana.